Reading from the N-terminus, the 182-residue chain is Ribosome-recycling factor (182 aa).

It belongs to the RRF family.

The protein localises to the cytoplasm. In terms of biological role, responsible for the release of ribosomes from messenger RNA at the termination of protein biosynthesis. May increase the efficiency of translation by recycling ribosomes from one round of translation to another. The polypeptide is Ribosome-recycling factor (Synechococcus sp. (strain WH7803)).